The chain runs to 189 residues: GTP cyclohydrolase 1 (189 aa).

Zn(2+) contacts are provided by cysteine 78, histidine 81, and cysteine 150.

Belongs to the GTP cyclohydrolase I family. As to quaternary structure, homomer.

The enzyme catalyses GTP + H2O = 7,8-dihydroneopterin 3'-triphosphate + formate + H(+). It functions in the pathway cofactor biosynthesis; 7,8-dihydroneopterin triphosphate biosynthesis; 7,8-dihydroneopterin triphosphate from GTP: step 1/1. This is GTP cyclohydrolase 1 from Bacillus cytotoxicus (strain DSM 22905 / CIP 110041 / 391-98 / NVH 391-98).